Consider the following 228-residue polypeptide: 7-cyano-7-deazaguanine synthase (228 aa).

7-17 (LSGGLDSAVNL) provides a ligand contact to ATP. C192, C200, C203, and C206 together coordinate Zn(2+).

It belongs to the QueC family. In terms of assembly, homodimer. Requires Zn(2+) as cofactor.

It carries out the reaction 7-carboxy-7-deazaguanine + NH4(+) + ATP = 7-cyano-7-deazaguanine + ADP + phosphate + H2O + H(+). The protein operates within purine metabolism; 7-cyano-7-deazaguanine biosynthesis. Catalyzes the ATP-dependent conversion of 7-carboxy-7-deazaguanine (CDG) to 7-cyano-7-deazaguanine (preQ(0)). The protein is 7-cyano-7-deazaguanine synthase of Desulforamulus reducens (strain ATCC BAA-1160 / DSM 100696 / MI-1) (Desulfotomaculum reducens).